A 412-amino-acid polypeptide reads, in one-letter code: O-acetyl-L-homoserine sulfhydrylase 2 (412 aa).

At Lys202 the chain carries N6-(pyridoxal phosphate)lysine.

It belongs to the trans-sulfuration enzymes family. In terms of assembly, homotetramer. Pyridoxal 5'-phosphate serves as cofactor.

The catalysed reaction is O-acetyl-L-homoserine + hydrogen sulfide = L-homocysteine + acetate. Its activity is regulated as follows. Inhibited by the carbonyl reagents hydroxylamine and phenylhydrazine. Also inhibited by methionine and propargylglycine. Functionally, catalyzes the conversion of O-acetyl-L-homoserine (OAH) into homocysteine in the methionine biosynthesis pathway. Has weak activity with O-acetyl-L-serine, O-phospho-L-serine, L-serine, O-succinyl-L-homoserine and L-homoserine. Shows a very low CTT gamma-synthase activity. In Thermus thermophilus (strain ATCC 27634 / DSM 579 / HB8), this protein is O-acetyl-L-homoserine sulfhydrylase 2.